The following is a 526-amino-acid chain: GMP synthase [glutamine-hydrolyzing] (526 aa).

Residues 13 to 204 (TVLVVDFGAQ…LYRGAGLSPD (192 aa)) form the Glutamine amidotransferase type-1 domain. Cys90 functions as the Nucleophile in the catalytic mechanism. Catalysis depends on residues His178 and Glu180. One can recognise a GMPS ATP-PPase domain in the interval 205–400 (WTTGNVIEEQ…LGLPDEIVQR (196 aa)). An ATP-binding site is contributed by 232–238 (SGGVDSA).

In terms of assembly, homodimer.

It carries out the reaction XMP + L-glutamine + ATP + H2O = GMP + L-glutamate + AMP + diphosphate + 2 H(+). The protein operates within purine metabolism; GMP biosynthesis; GMP from XMP (L-Gln route): step 1/1. Catalyzes the synthesis of GMP from XMP. The protein is GMP synthase [glutamine-hydrolyzing] (guaA) of Streptomyces coelicolor (strain ATCC BAA-471 / A3(2) / M145).